We begin with the raw amino-acid sequence, 127 residues long: Large ribosomal subunit protein bL20 (127 aa).

It belongs to the bacterial ribosomal protein bL20 family.

Binds directly to 23S ribosomal RNA and is necessary for the in vitro assembly process of the 50S ribosomal subunit. It is not involved in the protein synthesizing functions of that subunit. In Mycoplasma pneumoniae (strain ATCC 29342 / M129 / Subtype 1) (Mycoplasmoides pneumoniae), this protein is Large ribosomal subunit protein bL20 (rplT).